A 700-amino-acid chain; its full sequence is Methionine--tRNA ligase (700 aa).

A 'HIGH' region motif is present at residues 13–23; it reads PYANGDIHLGH. Zn(2+) contacts are provided by Cys-144, Cys-147, Cys-157, and Cys-160. The short motif at 341-345 is the 'KMSKS' region element; that stretch reads KMSKS. Lys-344 lines the ATP pocket. The disordered stretch occupies residues 562–587; the sequence is QVGAPTASQDDKAAAKNTSPAAMPSS. Polar residues predominate over residues 577–587; the sequence is KNTSPAAMPSS. In terms of domain architecture, tRNA-binding spans 598–700; sequence DFAKVEMKVA…DEAVIGDSLA (103 aa).

The protein belongs to the class-I aminoacyl-tRNA synthetase family. MetG type 1 subfamily. Homodimer. The cofactor is Zn(2+).

It localises to the cytoplasm. The enzyme catalyses tRNA(Met) + L-methionine + ATP = L-methionyl-tRNA(Met) + AMP + diphosphate. Its function is as follows. Is required not only for elongation of protein synthesis but also for the initiation of all mRNA translation through initiator tRNA(fMet) aminoacylation. The protein is Methionine--tRNA ligase of Psychrobacter cryohalolentis (strain ATCC BAA-1226 / DSM 17306 / VKM B-2378 / K5).